The following is a 315-amino-acid chain: Acetyl-coenzyme A carboxylase carboxyl transferase subunit alpha (315 aa).

In terms of domain architecture, CoA carboxyltransferase C-terminal spans leucine 36–valine 289.

Belongs to the AccA family. In terms of assembly, acetyl-CoA carboxylase is a heterohexamer composed of biotin carboxyl carrier protein (AccB), biotin carboxylase (AccC) and two subunits each of ACCase subunit alpha (AccA) and ACCase subunit beta (AccD).

It localises to the cytoplasm. It catalyses the reaction N(6)-carboxybiotinyl-L-lysyl-[protein] + acetyl-CoA = N(6)-biotinyl-L-lysyl-[protein] + malonyl-CoA. The protein operates within lipid metabolism; malonyl-CoA biosynthesis; malonyl-CoA from acetyl-CoA: step 1/1. In terms of biological role, component of the acetyl coenzyme A carboxylase (ACC) complex. First, biotin carboxylase catalyzes the carboxylation of biotin on its carrier protein (BCCP) and then the CO(2) group is transferred by the carboxyltransferase to acetyl-CoA to form malonyl-CoA. In Francisella philomiragia subsp. philomiragia (strain ATCC 25017 / CCUG 19701 / FSC 153 / O#319-036), this protein is Acetyl-coenzyme A carboxylase carboxyl transferase subunit alpha.